We begin with the raw amino-acid sequence, 235 residues long: TVP38/TMEM64 family inner membrane protein YdjZ (235 aa).

The Periplasmic segment spans residues 1-13; it reads MMMMQSRKIWYYR. The helical transmembrane segment at 14 to 34 threads the bilayer; that stretch reads ITLIILLFAMLLAWALLPGVH. The Cytoplasmic segment spans residues 35 to 64; sequence EFINRSVAAFAAVDQQGIERFIQSYGALAA. Residues 65–85 form a helical membrane-spanning segment; sequence VVSFLLMILQAIAAPLPAFLI. Topologically, residues 86-95 are periplasmic; sequence TFANASLFGA. The tract at residues 90-199 is VTT domain; it reads ASLFGAFWGG…IVYSWAGSML (110 aa). A helical transmembrane segment spans residues 96-116; it reads FWGGLLSWTSSMAGAALCFFI. The Cytoplasmic portion of the chain corresponds to 117–176; sequence ARVMGREVVEKLTGKTVLDSMDGFFTRYGKHTILVCRLLPFVPFDPISYAAGLTSIRFRS. A helical membrane pass occupies residues 177 to 197; sequence FFIATGLGQLPATIVYSWAGS. The Periplasmic segment spans residues 198-202; the sequence is MLTGG. The chain crosses the membrane as a helical span at residues 203–223; sequence TFWFVTGLFILFALTVVIFMA. The Cytoplasmic portion of the chain corresponds to 224–235; sequence KKIWLERQKRNA.

Belongs to the TVP38/TMEM64 family.

It localises to the cell inner membrane. This chain is TVP38/TMEM64 family inner membrane protein YdjZ (ydjZ), found in Escherichia coli (strain K12).